The primary structure comprises 321 residues: Basic peroxidase (321 aa).

An N-terminal signal peptide occupies residues 1–30 (MSYHKSSGTTLMVPLFMLLISVNYFMSCNA). Position 31 is a pyrrolidone carboxylic acid (Gln-31). Intrachain disulfides connect Cys-41–Cys-117, Cys-74–Cys-79, Cys-123–Cys-317, and Cys-202–Cys-228. The active-site Proton acceptor is His-72. The Ca(2+) site is built by Asp-73, Val-76, Gly-78, Asp-80, and Ser-82. Residue Pro-165 coordinates substrate. Heme b is bound at residue His-195. Thr-196 contributes to the Ca(2+) binding site. Residues Asn-211 and Asn-221 are each glycosylated (N-linked (GlcNAc...) asparagine). Ca(2+)-binding residues include Asp-241, Thr-244, and Asp-249.

This sequence belongs to the peroxidase family. Classical plant (class III) peroxidase subfamily. Requires heme b as cofactor. The cofactor is Ca(2+). N-glycosylated. In terms of tissue distribution, expressed in tracheary elements, roots, young and old hypocotyls, and stems in the partially glycosylated form and in roots and young hypocotyls in the fully glycosylated form. None of the isoforms is significantly expressed in leaves or cotyledons.

The protein localises to the secreted. It carries out the reaction 2 a phenolic donor + H2O2 = 2 a phenolic radical donor + 2 H2O. Removal of H(2)O(2), oxidation of toxic reductants, biosynthesis and degradation of lignin, suberization, auxin catabolism, response to environmental stresses such as wounding, pathogen attack and oxidative stress. These functions might be dependent on each isozyme/isoform in each plant tissue. Involved in the synthesis of highly polymerized lignins. The protein is Basic peroxidase (POD3) of Zinnia elegans (Garden zinnia).